The sequence spans 159 residues: Transcription antitermination protein NusB (159 aa).

It belongs to the NusB family.

Involved in transcription antitermination. Required for transcription of ribosomal RNA (rRNA) genes. Binds specifically to the boxA antiterminator sequence of the ribosomal RNA (rrn) operons. The chain is Transcription antitermination protein NusB from Stenotrophomonas maltophilia (strain K279a).